We begin with the raw amino-acid sequence, 177 residues long: Probable nicotinate-nucleotide adenylyltransferase (177 aa).

This sequence belongs to the NadD family.

The enzyme catalyses nicotinate beta-D-ribonucleotide + ATP + H(+) = deamido-NAD(+) + diphosphate. The protein operates within cofactor biosynthesis; NAD(+) biosynthesis; deamido-NAD(+) from nicotinate D-ribonucleotide: step 1/1. Catalyzes the reversible adenylation of nicotinate mononucleotide (NaMN) to nicotinic acid adenine dinucleotide (NaAD). The sequence is that of Probable nicotinate-nucleotide adenylyltransferase from Nitratiruptor sp. (strain SB155-2).